The chain runs to 553 residues: Putative transport protein YidE (553 aa).

5 consecutive transmembrane segments (helical) span residues 4–24 (IALTVSILALVAVVGLFIGNV), 28–48 (GIGLGIGGVLFGGIIVGHFVS), 65–85 (FGLILFVYTIGIQVGPGFFAS), 95–115 (LFAVLIVIIGGLVTAILHKLF), and 158–178 (MSYAMAYPFGICGILFTMWML). 2 consecutive RCK C-terminal domains span residues 191 to 276 (QQHE…VIGQ) and 279 to 361 (DTSL…VLGN). Transmembrane regions (helical) follow at residues 371 to 391 (MLPVFIGIGLGVLLGSIPVFV), 393 to 413 (GFPAALKLGLAGGPLIMALIL), 439 to 459 (IVLFLSVVGLKSGGDFVNTLV), 464 to 484 (LSWIGYGALITAVPLITVGIL), 493 to 513 (YLTMCGMLAGSMTDPPALAFA), and 533 to 553 (LVMFLRIITPQLLAVLFWSIG).

The protein belongs to the AAE transporter (TC 2.A.81) family. YidE subfamily.

The protein resides in the cell membrane. The sequence is that of Putative transport protein YidE from Shigella boydii serotype 4 (strain Sb227).